Here is a 148-residue protein sequence, read N- to C-terminus: Large ribosomal subunit protein uL15 (148 aa).

The segment covering 1 to 30 has biased composition (basic residues); the sequence is MSTHKKKTRKLRGHVSHGHGRIGKHRKHPG. The tract at residues 1–37 is disordered; it reads MSTHKKKTRKLRGHVSHGHGRIGKHRKHPGGRGNAGG.

The protein belongs to the universal ribosomal protein uL15 family.

The sequence is that of Large ribosomal subunit protein uL15 (RpL27A) from Tenebrio molitor (Yellow mealworm beetle).